We begin with the raw amino-acid sequence, 459 residues long: MGSYFSLKNSDLHPSCIALPRSAEEVSKAVRTLSLGAHKWEGQCQFGVRGGGHTPFKGAASTDNGIVLDLLHMPSAGISPDYETITVSPSTTWDLVYEVLDAHNRSTLGTKVAGIGVGGASTSCGVSYFSPRYGYICDMVENWEVVLATGDIVNANANENADLWKALRGGINNFGIVTAVTLKAFEQGPFWGGQTFHSIETRQEHFKNHAKLASAHPYDPYAHYINTLVLANGGHWFIGNSIQYTKSDPPVAEPEVFKPFLKTERTPIFPGLPEDTLRVDNVTSFSREYAANTLYPQRWQFACISFAPDADFMETFFQMANDAMQQYVKLPGFKLILNYQPAPTVQLERNGAVDSLGPIQTEGNVVFVHWAVSYDESEAQFDDAITKSVQDLFHAANTKAKELGIYRHFIQPTYADSWQSPFDYRSKSTIEELVATSKKYDPLQVFQKQVPGGFKLPQI.

One can recognise an FAD-binding PCMH-type domain in the interval 10-187 (SDLHPSCIAL…TAVTLKAFEQ (178 aa)).

Belongs to the oxygen-dependent FAD-linked oxidoreductase family.

It participates in mycotoxin biosynthesis. Functionally, FAD-dependent monooxygenase; part of the gene cluster that mediates the biosynthesis of cercosporin, a light-activated, non-host-selective toxin. The perylenequinone chromophore of cercosporin absorbs light energy to attain an electronically-activated triplet state and produces active oxygen species such as the hydroxyl radical, superoxide, hydrogen peroxide or singlet oxygen upon reaction with oxygen molecules. These reactive oxygen species cause damage to various cellular components including lipids, proteins and nucleic acids. The first step of cercosporin biosynthesis is performed by the polyketide synthase CTB1 which catalyzes the formation of nor-toralactone. The starter unit acyltransferase (SAT) domain of CTB1 initiates polyketide extension by the selective utilization of acetyl-CoA, which is elongated to the heptaketide in the beta-ketoacyl synthase (KS) domain by successive condensations with six malonyl units introduced by the malonyl acyltransferase (MAT) domain. The product template (PT) domain catalyzes C4-C9 and C2-C11 aldol cyclizations and dehydrations to a trihydroxynaphthalene, which is thought to be delivered to the thioesterase (TE) domain for product release. The bifunctional enzyme CTB3 then methylates nor-toralactone to toralactone before conducting an unusual oxidative aromatic ring opening. The O-methyltransferase CTB2 further methylates the nascent OH-6 of the CBT3 product, blocking further oxidation at this site before the reductase CTB6 reduces the 2-oxopropyl ketone at position C7, giving naphthalene. The FAD-dependent monooxygenase CTB5 in concert with the multicopper oxidase CTB12 are responsible for homodimerization of naphthalene with CTB7 installing the dioxepine moiety, finally producing cercosporin. The fasciclin domain-containing protein CTB11 might act with CTB5 and CTB12 whereas the roles of CTB9 and CTB10 have still to be elucidated. This Cercospora nicotianae (Barn spot disease fungus) protein is FAD-dependent monooxygenase CTB5.